The chain runs to 147 residues: Hemoglobin subunit epsilon-Y2 (147 aa).

Positions 3–147 (NFTAEEKTLI…VATALSHKYH (145 aa)) constitute a Globin domain. Serine 51 is modified (phosphoserine). Heme b is bound by residues histidine 64 and histidine 93.

The protein belongs to the globin family. In terms of tissue distribution, high expression in yolk sac blood islands, fetal liver, and embryonic erythrocytes. Very low levels in adult liver and spleen.

In terms of biological role, hemoglobin epsilon chain is a beta-type chain found in early embryos. The chain is Hemoglobin subunit epsilon-Y2 (Hbb-y) from Mus musculus (Mouse).